The chain runs to 153 residues: Ribonuclease K3 (153 aa).

The signal sequence occupies residues Met1–Ala26. Residue Asn30 is glycosylated (N-linked (GlcNAc...) asparagine). His41 functions as the Proton acceptor in the catalytic mechanism. Intrachain disulfides connect Cys49–Cys107, Cys63–Cys117, Cys81–Cys132, and Cys88–Cys95. N-linked (GlcNAc...) asparagine glycosylation occurs at Asn58. Lys64 to Thr68 contributes to the substrate binding site. Asn85 carries N-linked (GlcNAc...) asparagine glycosylation. Lys89 lines the substrate pocket. His148 functions as the Proton donor in the catalytic mechanism.

This sequence belongs to the pancreatic ribonuclease family. In terms of assembly, interacts (via N-terminus) with bacterial lipopolysaccharide (LPS). In terms of tissue distribution, kidney.

The protein localises to the secreted. It is found in the lysosome. Its subcellular location is the cytoplasmic granule. Ribonuclease which shows a preference for the pyrimidines uridine and cytosine. Has potent antibacterial activity against a range of Gram-positive and Gram-negative bacteria, including P.aeruginosa, A.baumanii, M.luteus, S.aureus, E.faecalis, E.faecium, S.saprophyticus and E.coli. Causes loss of bacterial membrane integrity, and also promotes agglutination of Gram-negative bacteria. Probably contributes to urinary tract sterility. Bactericidal activity is independent of RNase activity. This Sus scrofa (Pig) protein is Ribonuclease K3 (RNASE6).